A 1480-amino-acid polypeptide reads, in one-letter code: Nonribosomal peptide synthetase-like enzyme fsqF (1480 aa).

The interval 31–59 (SPFADEPSIDVPSTHLPVVTPRSKTANDR) is disordered. Residues 132-527 (DSARATPHAP…VGRTDDQVKY (396 aa)) form an adenylation domain region. The 80-residue stretch at 662–741 (STARTIAREY…SIASLIDANS (80 aa)) folds into the Carrier domain. Ser700 is modified (O-(pantetheine 4'-phosphoryl)serine). A compositionally biased stretch (polar residues) spans 739–754 (ANSSPGRGQPLNTQET). Residues 739–773 (ANSSPGRGQPLNTQETARLPLRSNGPAPSQQALER) form a disordered region. An NAD-binding domain region spans residues 780-1003 (LTGASGFLGI…ACVELGFYNG (224 aa)). Residues 1100–1465 (NAAGTVVHRE…YNTVAEVQEF (366 aa)) form an aminotransferase domain region.

It belongs to the NRP synthetase family.

It participates in secondary metabolite biosynthesis. Nonribosomal peptide synthetase-like enzyme; part of the gene cluster that mediates the biosynthesis of the isoquinoline alkaloids fumisoquin A, fumisoquin B and fumisoquin C; as well as small amounts of fumipyrrole as a shunt metabolite. The products of the cluster lead to a brown coloration and are important for growth and conidiation. The nonribosomal peptide synthetase-like protein fsqF, which lacks a canonical condensation domain, is required for addition of a serine-derived dehydroalanine moiety to activated tyrosine but is not essential for the subsequent steps leading to isoquinoline formation. A different enzyme, most likely the ATP-grasp enzyme fsqD, is responsible for activation of tyrosine. Three additional enzymes encoded by the fsq cluster, the N-methyltransferase fsqC, the phenol 2-monooxygenase fsqG and the FAD-dependent oxidase fsqB, catalyze the formation of the isoquinoline ring system in the fumisoquins. FsqB converts the fspF thiolation domain-bound (2S,4S,5S)-2-amino-6-(3,4-dihydroxyphenyl)-4-hydroxy-5-(methylamino)hexanoyl into isoquinoline. The cyclization most likely proceeds via a two-step mechanism, beginning with FAD-dependent oxidation of the methyl group to an iminium species followed by electrophilic attack on the deprotonated phenol. This Aspergillus fumigatus (strain ATCC MYA-4609 / CBS 101355 / FGSC A1100 / Af293) (Neosartorya fumigata) protein is Nonribosomal peptide synthetase-like enzyme fsqF.